An 826-amino-acid polypeptide reads, in one-letter code: DEAD-box ATP-dependent RNA helicase 13 (826 aa).

Residues 1 to 10 are compositionally biased toward basic and acidic residues; it reads MVTGDKESSL. Disordered stretches follow at residues 1–62 and 76–175; these read MVTG…QLDG and HLTL…GDDT. Residues 11-22 show a composition bias toward basic residues; that stretch reads MKKRNKRSHKRK. The span at 49–58 shows a compositional bias: polar residues; sequence SFSTLFSGSG. The span at 94–128 shows a compositional bias: acidic residues; sequence EDDDDTNETVDEMIEGEEAEEDGEGRDDEDDEDDE. Residues 125 to 166 are a coiled coil; sequence EDDEETRKKKEKKAKRNKEKKKEKKKKKQKKINEAAKNQDAS. Over residues 133 to 154 the composition is skewed to basic residues; the sequence is KKEKKAKRNKEKKKEKKKKKQK. A Q motif motif is present at residues 190-218; it reads SAWSSMRLHPLLMKSIYRLDFKEPTKIQK. The region spanning 222–439 is the Helicase ATP-binding domain; it reads NVAAYQGKDV…KLKRGSSKSK (218 aa). 235 to 242 contacts ATP; that stretch reads AETGSGKT. Residues 363-366 carry the DEAD box motif; the sequence is DEAD. In terms of domain architecture, Helicase C-terminal spans 476–644; sequence KIEESFIKCE…YMPAVRKRLY (169 aa). Coiled coils occupy residues 666-712 and 783-810; these read LKKH…TLLS and KMKG…IGRR. Residues 783–826 form a disordered region; it reads KMKGQSAEKRRDIASLKKKRKEEKIGRRDQRRNQKKQRKLMASS. Basic and acidic residues-rich tracts occupy residues 788 to 797 and 804 to 814; these read SAEKRRDIAS and EEKIGRRDQRR. Basic residues predominate over residues 815 to 826; the sequence is NQKKQRKLMASS.

The protein belongs to the DEAD box helicase family. DDX24/MAK5 subfamily.

It carries out the reaction ATP + H2O = ADP + phosphate + H(+). The chain is DEAD-box ATP-dependent RNA helicase 13 (RH13) from Arabidopsis thaliana (Mouse-ear cress).